The following is a 2410-amino-acid chain: Dual specificity protein kinase splA (2410 aa).

Disordered regions lie at residues 29-48 (NNNN…NNNN), 66-103 (NHPS…GELT), 116-158 (NTQT…SNGG), 187-252 (NISP…SSGI), 508-647 (QQLQ…VPSA), and 659-820 (SSSS…KKEG). 2 stretches are compositionally biased toward low complexity: residues 116–128 (NTQT…TSPN) and 137–158 (NTTT…SNGG). Positions 514 to 525 (QPPPTIQPPPQQ) are enriched in pro residues. The segment covering 530–544 (LRGNRSSGNLSGLNS) has biased composition (low complexity). Positions 545 to 554 (FSLKQSTDSL) are enriched in polar residues. The segment covering 560 to 583 (SQQSTVSSNSTPIAATPISPLTAP) has biased composition (low complexity). Residues 584–594 (TSPPPPPPPPT) show a composition bias toward pro residues. Low complexity-rich tracts occupy residues 595–618 (NFNS…NTTV), 627–639 (VLPK…SPRP), 659–686 (SSSS…LNIS), 701–738 (SPSY…SPSV), 746–759 (ISPN…PNIS), and 777–813 (NTNN…NNTN). 2 B30.2/SPRY domains span residues 822 to 1004 (SSWF…GPFS) and 1020 to 1209 (DSGG…PPFK). Disordered stretches follow at residues 1228-1428 (PNGN…NNIY) and 1493-1512 (SLGV…PRKI). 4 stretches are compositionally biased toward low complexity: residues 1229-1359 (NGNN…NNNI), 1373-1399 (SSTG…NNSS), 1419-1428 (SSTNNNNNIY), and 1493-1507 (SLGV…SPKT). Positions 1481-1703 (PITASTNHTL…CVATFPGGHF (223 aa)) constitute a B30.2/SPRY 3 domain. Residues 1734–1798 (WAPNDVAIWL…INRLNRMIQI (65 aa)) form the SAM domain. A disordered region spans residues 1862-2105 (KSYTQKEIED…PPPPPQLPVR (244 aa)). Residues 1865–1874 (TQKEIEDRNR) show a composition bias toward basic and acidic residues. Residues 1951 to 1967 (SVSSTGGSSGFLTFPSS) are compositionally biased toward low complexity. Residues 1989–2002 (ITSNYKGITNTGQP) are compositionally biased toward polar residues. The segment covering 2020–2070 (SNNGNNGNNNNNNNNNNIKANQQQQQQSSYQQSQTQQQQQHITSTSTSTTN) has biased composition (low complexity). The segment covering 2089 to 2102 (PSRPPPPPPPPPQL) has biased composition (pro residues). The Protein kinase domain occupies 2115 to 2387 (LEFGQTIGKG…FKQIIVHLKE (273 aa)). ATP is bound by residues 2121-2129 (IGKGFFGEV) and lysine 2142. Aspartate 2243 serves as the catalytic Proton acceptor.

The protein belongs to the protein kinase superfamily. TKL Tyr protein kinase family. Post-translationally, tyrosine kinase domain is capable of autophosphorylation, in vitro; however it is also autophosphorylated on serine and threonine residues.

It carries out the reaction L-tyrosyl-[protein] + ATP = O-phospho-L-tyrosyl-[protein] + ADP + H(+). Essential for spore differentiation. This Dictyostelium discoideum (Social amoeba) protein is Dual specificity protein kinase splA (splA).